A 75-amino-acid chain; its full sequence is Defensin J1-1 (75 aa).

The first 27 residues, 1–27 (MAGFSKVVATIFLMMLLVFATDMMAEA), serve as a signal peptide directing secretion. 4 disulfides stabilise this stretch: Cys30/Cys74, Cys41/Cys61, Cys47/Cys68, and Cys51/Cys70.

It belongs to the DEFL family. As to quaternary structure, monomer. In terms of tissue distribution, expressed in orange and red ripe fruit and to a lesser extent in mature, green fruit. Present in trace in young, green fruit.

Its subcellular location is the secreted. Functionally, plant defense peptide with antifungal activity against F.oxysporum and B.cinerea. This Capsicum annuum (Capsicum pepper) protein is Defensin J1-1.